The primary structure comprises 459 residues: Type I restriction enzyme HindI specificity subunit (459 aa).

It belongs to the type-I restriction system S methylase family. In terms of assembly, the type I restriction/modification system is composed of three polypeptides R, M and S; the restriction enzyme has stoichiometry R(2)M(2)S(1) while the methyltransferase is M(2)S(1).

Functionally, the specificity (S) subunit of a type I restriction enzyme; this subunit dictates DNA sequence specificity. The M and S subunits together form a methyltransferase (MTase) that methylates adenosines in the sequence 5'-RAACN(5)TAG-3'. Methylation protects against cleavage by HindI. In the presence of the R subunit the complex can also act as an endonuclease, binding to the same target sequence but cutting the DNA some distance from this site. Whether the DNA is cut or modified depends on the methylation state of the target sequence. When the target site is unmodified, the DNA is cut. When the target site is hemimethylated, the complex acts as a maintenance MTase modifying the DNA so that both strands become methylated. After locating a non-methylated recognition site, the enzyme complex serves as a molecular motor that translocates DNA in an ATP-dependent manner until a collision occurs that triggers cleavage. The sequence is that of Type I restriction enzyme HindI specificity subunit from Haemophilus influenzae (strain ATCC 51907 / DSM 11121 / KW20 / Rd).